The primary structure comprises 252 residues: Geranylgeranylglyceryl phosphate synthase (252 aa).

Asp27 and Thr57 together coordinate Mg(2+). Sn-glycerol 1-phosphate is bound by residues 175 to 181 (YLEAGSG), 206 to 207 (GG), and 228 to 229 (GN).

It belongs to the GGGP/HepGP synthase family. Group II subfamily. Requires Mg(2+) as cofactor.

The protein resides in the cytoplasm. The catalysed reaction is sn-glycerol 1-phosphate + (2E,6E,10E)-geranylgeranyl diphosphate = sn-3-O-(geranylgeranyl)glycerol 1-phosphate + diphosphate. Its pathway is membrane lipid metabolism; glycerophospholipid metabolism. In terms of biological role, prenyltransferase that catalyzes the transfer of the geranylgeranyl moiety of geranylgeranyl diphosphate (GGPP) to the C3 hydroxyl of sn-glycerol-1-phosphate (G1P). This reaction is the first ether-bond-formation step in the biosynthesis of archaeal membrane lipids. This is Geranylgeranylglyceryl phosphate synthase from Metallosphaera sedula (strain ATCC 51363 / DSM 5348 / JCM 9185 / NBRC 15509 / TH2).